Consider the following 272-residue polypeptide: Putative phosphoenolpyruvate synthase regulatory protein (272 aa).

152 to 159 (GVSRCGKT) provides a ligand contact to ADP.

Belongs to the pyruvate, phosphate/water dikinase regulatory protein family. PSRP subfamily.

It catalyses the reaction [pyruvate, water dikinase] + ADP = [pyruvate, water dikinase]-phosphate + AMP + H(+). The enzyme catalyses [pyruvate, water dikinase]-phosphate + phosphate + H(+) = [pyruvate, water dikinase] + diphosphate. In terms of biological role, bifunctional serine/threonine kinase and phosphorylase involved in the regulation of the phosphoenolpyruvate synthase (PEPS) by catalyzing its phosphorylation/dephosphorylation. This Pseudomonas fluorescens (strain Pf0-1) protein is Putative phosphoenolpyruvate synthase regulatory protein.